The sequence spans 339 residues: uncharacterized protein (339 aa).

Residues 17–111 (VRGEIKCLDV…WEDLSLPQNE (95 aa)) form the Rhodanese domain.

This is an uncharacterized protein from Schizosaccharomyces pombe (strain 972 / ATCC 24843) (Fission yeast).